A 276-amino-acid polypeptide reads, in one-letter code: Ribosomal RNA small subunit methyltransferase I (276 aa).

The protein belongs to the methyltransferase superfamily. RsmI family.

It localises to the cytoplasm. The enzyme catalyses cytidine(1402) in 16S rRNA + S-adenosyl-L-methionine = 2'-O-methylcytidine(1402) in 16S rRNA + S-adenosyl-L-homocysteine + H(+). Its function is as follows. Catalyzes the 2'-O-methylation of the ribose of cytidine 1402 (C1402) in 16S rRNA. The polypeptide is Ribosomal RNA small subunit methyltransferase I (Mycoplasma pneumoniae (strain ATCC 29342 / M129 / Subtype 1) (Mycoplasmoides pneumoniae)).